Here is a 159-residue protein sequence, read N- to C-terminus: 2-C-methyl-D-erythritol 2,4-cyclodiphosphate synthase (159 aa).

A divalent metal cation-binding residues include aspartate 8 and histidine 10. 4-CDP-2-C-methyl-D-erythritol 2-phosphate contacts are provided by residues 8-10 (DVH) and 34-35 (HS). Histidine 42 provides a ligand contact to a divalent metal cation. 4-CDP-2-C-methyl-D-erythritol 2-phosphate-binding positions include 56 to 58 (DIG), 61 to 65 (FPDTD), 132 to 135 (TTTE), phenylalanine 139, and arginine 142.

Belongs to the IspF family. Homotrimer. It depends on a divalent metal cation as a cofactor.

It carries out the reaction 4-CDP-2-C-methyl-D-erythritol 2-phosphate = 2-C-methyl-D-erythritol 2,4-cyclic diphosphate + CMP. It functions in the pathway isoprenoid biosynthesis; isopentenyl diphosphate biosynthesis via DXP pathway; isopentenyl diphosphate from 1-deoxy-D-xylulose 5-phosphate: step 4/6. Involved in the biosynthesis of isopentenyl diphosphate (IPP) and dimethylallyl diphosphate (DMAPP), two major building blocks of isoprenoid compounds. Catalyzes the conversion of 4-diphosphocytidyl-2-C-methyl-D-erythritol 2-phosphate (CDP-ME2P) to 2-C-methyl-D-erythritol 2,4-cyclodiphosphate (ME-CPP) with a corresponding release of cytidine 5-monophosphate (CMP). This Syntrophobacter fumaroxidans (strain DSM 10017 / MPOB) protein is 2-C-methyl-D-erythritol 2,4-cyclodiphosphate synthase.